Reading from the N-terminus, the 350-residue chain is UPF0284 protein MJ1598 (350 aa).

It belongs to the UPF0284 family.

This is UPF0284 protein MJ1598 from Methanocaldococcus jannaschii (strain ATCC 43067 / DSM 2661 / JAL-1 / JCM 10045 / NBRC 100440) (Methanococcus jannaschii).